We begin with the raw amino-acid sequence, 478 residues long: Ribosomal RNA small subunit methyltransferase F (478 aa).

Residues 126 to 132, Glu150, Asp177, and Asp195 contribute to the S-adenosyl-L-methionine site; that span reads AAAPGSK. Cys248 functions as the Nucleophile in the catalytic mechanism.

This sequence belongs to the class I-like SAM-binding methyltransferase superfamily. RsmB/NOP family.

The protein resides in the cytoplasm. It carries out the reaction cytidine(1407) in 16S rRNA + S-adenosyl-L-methionine = 5-methylcytidine(1407) in 16S rRNA + S-adenosyl-L-homocysteine + H(+). Specifically methylates the cytosine at position 1407 (m5C1407) of 16S rRNA. This is Ribosomal RNA small subunit methyltransferase F from Erwinia tasmaniensis (strain DSM 17950 / CFBP 7177 / CIP 109463 / NCPPB 4357 / Et1/99).